The primary structure comprises 375 residues: Succinyl-diaminopimelate desuccinylase (375 aa).

Position 66 (His66) interacts with Zn(2+). Residue Asp68 is part of the active site. Asp99 is a Zn(2+) binding site. Glu133 serves as the catalytic Proton acceptor. Zn(2+) contacts are provided by Glu134, Glu162, and His348.

Belongs to the peptidase M20A family. DapE subfamily. As to quaternary structure, homodimer. It depends on Zn(2+) as a cofactor. The cofactor is Co(2+).

It carries out the reaction N-succinyl-(2S,6S)-2,6-diaminopimelate + H2O = (2S,6S)-2,6-diaminopimelate + succinate. Its pathway is amino-acid biosynthesis; L-lysine biosynthesis via DAP pathway; LL-2,6-diaminopimelate from (S)-tetrahydrodipicolinate (succinylase route): step 3/3. Catalyzes the hydrolysis of N-succinyl-L,L-diaminopimelic acid (SDAP), forming succinate and LL-2,6-diaminopimelate (DAP), an intermediate involved in the bacterial biosynthesis of lysine and meso-diaminopimelic acid, an essential component of bacterial cell walls. The protein is Succinyl-diaminopimelate desuccinylase of Herminiimonas arsenicoxydans.